Consider the following 596-residue polypeptide: MARLGLAVCAASFHLFLLLASTSSLRRAPTEADTANHARRTAYHFQPAKNWQNDPNGPMYHNGMYHLFYQYNPHSALWDIGNLSWGHSVSGDLLNWAALDTALDPTSPFDANGCWSGSATILPGALPAILYTGIDASKEQVQNVAFAKNPSDPLLREWEKPAYNPVIALPADVPGDKFRDPSTAWLGRDGLWRIAVSAEVDGVASTLVYRSKDFVRWERNAAPLHASRAAGMVECPDLFPVAERGEDGLDTSANGAGGVRHVLKLSVMDTLQDYYMVGTYDDAADAFSPAEPERGDDCRSWRRLDYGHVYASKSFFDVRKNRRVLWAWANESDSQADDVARGWSGVQTFPRKMWLAKDGKQLLQWPIEEIKTLRRKRAGLWQGTRLGAGAVQEIVGVASSQADVEVVFKIPSLEEAERVDDPNRLLDPQKLCGEKGAAVRGGVGPFGLLVMASGDLHEHTAVFFRVFRHHDKYKLLMCTDLTKSSTRAGVYKPAYGGFVDMDIDDHKTISLRTLIDHSVVESFGGGGRACITARVYPEHVATSSSHLYVFNNGSDAVKVAKLEAWDLATATVNVVVGDHHGLVAPALELEPTRTTQ.

A signal peptide spans 1-24 (MARLGLAVCAASFHLFLLLASTSS). Substrate contacts are provided by residues 51-54 (WQND), Gln70, and Trp78. Asp54 is a catalytic residue. Residue Asn82 is glycosylated (N-linked (GlcNAc...) asparagine). Substrate is bound by residues 115–116 (WS), 179–180 (RD), and Glu234. Residue Asn330 is glycosylated (N-linked (GlcNAc...) asparagine). Cysteines 432 and 478 form a disulfide. The N-linked (GlcNAc...) asparagine glycan is linked to Asn552.

Belongs to the glycosyl hydrolase 32 family. As to expression, expressed in roots, leaves and flowers. Weakly expressed in seeds.

It localises to the secreted. Its subcellular location is the extracellular space. The protein resides in the apoplast. It is found in the cell wall. The catalysed reaction is Hydrolysis of terminal non-reducing beta-D-fructofuranoside residues in beta-D-fructofuranosides.. Its function is as follows. May play a role in sucrose partitioning during seed development. In Oryza sativa subsp. japonica (Rice), this protein is Beta-fructofuranosidase, insoluble isoenzyme 7 (CIN7).